Reading from the N-terminus, the 334-residue chain is Methylthioribose-1-phosphate isomerase (334 aa).

Residues Arg-44–Ala-46, Arg-87, and Gln-192 each bind substrate. Asp-233 serves as the catalytic Proton donor. Asn-243–Lys-244 contacts substrate.

It belongs to the eIF-2B alpha/beta/delta subunits family. MtnA subfamily.

It catalyses the reaction 5-(methylsulfanyl)-alpha-D-ribose 1-phosphate = 5-(methylsulfanyl)-D-ribulose 1-phosphate. It participates in amino-acid biosynthesis; L-methionine biosynthesis via salvage pathway; L-methionine from S-methyl-5-thio-alpha-D-ribose 1-phosphate: step 1/6. In terms of biological role, catalyzes the interconversion of methylthioribose-1-phosphate (MTR-1-P) into methylthioribulose-1-phosphate (MTRu-1-P). The protein is Methylthioribose-1-phosphate isomerase of Dehalococcoides mccartyi (strain ATCC BAA-2266 / KCTC 15142 / 195) (Dehalococcoides ethenogenes (strain 195)).